An 86-amino-acid chain; its full sequence is Translation initiation factor IF-1 3 (86 aa).

An S1-like domain is found at 1 to 72 (MAKEELIEMQ…NKGRVTFRHI (72 aa)).

The protein belongs to the IF-1 family. Component of the 30S ribosomal translation pre-initiation complex which assembles on the 30S ribosome in the order IF-2 and IF-3, IF-1 and N-formylmethionyl-tRNA(fMet); mRNA recruitment can occur at any time during PIC assembly.

The protein resides in the cytoplasm. In terms of biological role, one of the essential components for the initiation of protein synthesis. Stabilizes the binding of IF-2 and IF-3 on the 30S subunit to which N-formylmethionyl-tRNA(fMet) subsequently binds. Helps modulate mRNA selection, yielding the 30S pre-initiation complex (PIC). Upon addition of the 50S ribosomal subunit IF-1, IF-2 and IF-3 are released leaving the mature 70S translation initiation complex. The polypeptide is Translation initiation factor IF-1 3 (Acidovorax sp. (strain JS42)).